A 205-amino-acid chain; its full sequence is Ribonuclease HII (205 aa).

Residues 15-205 (SQVCGIDEAG…SFKLRKLGEK (191 aa)) form the RNase H type-2 domain. 3 residues coordinate a divalent metal cation: aspartate 21, glutamate 22, and aspartate 117.

The protein belongs to the RNase HII family. It depends on Mn(2+) as a cofactor. Requires Mg(2+) as cofactor.

It is found in the cytoplasm. It catalyses the reaction Endonucleolytic cleavage to 5'-phosphomonoester.. In terms of biological role, endonuclease that specifically degrades the RNA of RNA-DNA hybrids. The protein is Ribonuclease HII of Chlorobaculum tepidum (strain ATCC 49652 / DSM 12025 / NBRC 103806 / TLS) (Chlorobium tepidum).